Here is a 432-residue protein sequence, read N- to C-terminus: Transcriptional adapter 3-B (432 aa).

2 disordered regions span residues 90 to 124 and 275 to 315; these read HELGTPIKHSKPKKQKLDGKGSHASGPGPGRPKSR and SPVE…KSLE. The segment covering 293–305 has biased composition (polar residues); the sequence is DGASTSPRSQNKP. Residues 335–398 are a coiled coil; the sequence is ADDSEDEVLA…NEVMDAFRKI (64 aa).

It belongs to the NGG1 family.

Its subcellular location is the nucleus. Functions as a component of the PCAF complex. The PCAF complex is capable of efficiently acetylating histones in a nucleosomal context. The chain is Transcriptional adapter 3-B (tada3-b) from Xenopus laevis (African clawed frog).